The sequence spans 365 residues: Aminomethyltransferase (365 aa).

It belongs to the GcvT family. The glycine cleavage system is composed of four proteins: P, T, L and H.

It carries out the reaction N(6)-[(R)-S(8)-aminomethyldihydrolipoyl]-L-lysyl-[protein] + (6S)-5,6,7,8-tetrahydrofolate = N(6)-[(R)-dihydrolipoyl]-L-lysyl-[protein] + (6R)-5,10-methylene-5,6,7,8-tetrahydrofolate + NH4(+). The glycine cleavage system catalyzes the degradation of glycine. The polypeptide is Aminomethyltransferase (Yersinia pseudotuberculosis serotype O:3 (strain YPIII)).